Consider the following 88-residue polypeptide: Arminin 1c (88 aa).

The N-terminal stretch at methionine 1–alanine 18 is a signal peptide. Residues glutamate 19 to alanine 57 constitute a propeptide that is removed on maturation. Valine amide is present on valine 85.

It belongs to the arminin family. Expressed in entodermal epithelium along the body column.

The protein resides in the secreted. It is found in the target cell membrane. Functionally, antimicrobial peptide with a broad-spectrum antimicrobial activity. Keeps its antibacterial activity under a wide range of salt concentrations that mimic physiological conditions of human blood, which is surprising, since Hydra is an obligate freshwater animal with nearly no salt tolerance. Does not affect red blood cells. This Hydra vulgaris (Hydra) protein is Arminin 1c.